The primary structure comprises 936 residues: VPS35 endosomal protein-sorting factor-like (936 aa).

Disordered stretches follow at residues 43 to 69 (SKTK…VDPL) and 87 to 113 (DPAA…VGPD). Over residues 51-69 (KGSTSSTSSSSSSSVVDPL) the composition is skewed to low complexity. At Ser265 the chain carries Phosphoserine. A helical transmembrane segment spans residues 672–692 (AFVRACVAYCFITIPSLVGIF).

Belongs to the VPS35L family. As to quaternary structure, component of the heterotrimeric retriever complex formed by VPS26C, VPS29 and VPS35L. Interacts with VPS29. Interacts with COMMD1, CCDC93 and CCDC22; associates with the CCC (COMMD/CCDC22/CCDC93) complex which contains at least COMMD1 (and possibly other COMM domain-containing proteins), CCDC22 and CCDC93. Interacts with WASHC1, WASHC2A and WASHC2C. Interacts with SNX17 and SNX31.

The protein resides in the membrane. The protein localises to the endosome. Functionally, acts as a component of the retriever complex. The retriever complex is a heterotrimeric complex related to retromer cargo-selective complex (CSC) and essential for retromer-independent retrieval and recycling of numerous cargos such as integrin alpha-5/beta-1 (ITGA5:ITGB1). The recruitment of the retriever complex to the endosomal membrane involves CCC and WASH complexes. In the endosomes, drives the retrieval and recycling of NxxY-motif-containing cargo proteins by coupling to SNX17, a cargo essential for the homeostatic maintenance of numerous cell surface proteins associated with processes that include cell migration, cell adhesion, nutrient supply and cell signaling. Involved in copper-dependent ATP7A trafficking between the trans-Golgi network and vesicles in the cell periphery; the function is proposed to depend on its association with the CCC complex and cooperation with the WASH complex on early endosomes. Seems not to be required for CCC complex stability. The protein is VPS35 endosomal protein-sorting factor-like of Rattus norvegicus (Rat).